Consider the following 221-residue polypeptide: Imidazole glycerol phosphate synthase subunit HisH (221 aa).

The Glutamine amidotransferase type-1 domain occupies 9–221 (DVVIIDTGCA…QILGNFLKMQ (213 aa)). The active-site Nucleophile is cysteine 84. Active-site residues include histidine 202 and glutamate 204.

As to quaternary structure, heterodimer of HisH and HisF.

The protein resides in the cytoplasm. It carries out the reaction 5-[(5-phospho-1-deoxy-D-ribulos-1-ylimino)methylamino]-1-(5-phospho-beta-D-ribosyl)imidazole-4-carboxamide + L-glutamine = D-erythro-1-(imidazol-4-yl)glycerol 3-phosphate + 5-amino-1-(5-phospho-beta-D-ribosyl)imidazole-4-carboxamide + L-glutamate + H(+). It catalyses the reaction L-glutamine + H2O = L-glutamate + NH4(+). Its pathway is amino-acid biosynthesis; L-histidine biosynthesis; L-histidine from 5-phospho-alpha-D-ribose 1-diphosphate: step 5/9. Its function is as follows. IGPS catalyzes the conversion of PRFAR and glutamine to IGP, AICAR and glutamate. The HisH subunit catalyzes the hydrolysis of glutamine to glutamate and ammonia as part of the synthesis of IGP and AICAR. The resulting ammonia molecule is channeled to the active site of HisF. This chain is Imidazole glycerol phosphate synthase subunit HisH, found in Shewanella oneidensis (strain ATCC 700550 / JCM 31522 / CIP 106686 / LMG 19005 / NCIMB 14063 / MR-1).